The chain runs to 537 residues: Chaperonin GroEL (537 aa).

ATP-binding positions include Thr-29–Pro-32, Asp-86–Thr-90, Gly-413, and Asp-492.

It belongs to the chaperonin (HSP60) family. In terms of assembly, forms a cylinder of 14 subunits composed of two heptameric rings stacked back-to-back. Interacts with the co-chaperonin GroES.

It is found in the cytoplasm. The enzyme catalyses ATP + H2O + a folded polypeptide = ADP + phosphate + an unfolded polypeptide.. Its function is as follows. Together with its co-chaperonin GroES, plays an essential role in assisting protein folding. The GroEL-GroES system forms a nano-cage that allows encapsulation of the non-native substrate proteins and provides a physical environment optimized to promote and accelerate protein folding. The chain is Chaperonin GroEL from Dehalococcoides mccartyi (strain ATCC BAA-2100 / JCM 16839 / KCTC 5957 / BAV1).